We begin with the raw amino-acid sequence, 250 residues long: Cobalt transport protein CbiM (250 aa).

The N-terminal stretch at 1-25 (MKQNIKLGVIAALMLIVLTPVTSNA) is a signal peptide. 6 consecutive transmembrane segments (helical) span residues 33-53 (LPVK…LVGL), 68-88 (VLLA…IPSV), 100-120 (LGAI…VLIF), 132-152 (TLGA…FLIF), 163-183 (AMPV…VTSI), and 205-225 (GIFF…TVIV).

It belongs to the CbiM family. Forms an energy-coupling factor (ECF) transporter complex composed of an ATP-binding protein (A component, CbiO), a transmembrane protein (T component, CbiQ) and 2 possible substrate-capture proteins (S components, CbiM and CbiN) of unknown stoichimetry.

Its subcellular location is the cell membrane. It participates in cofactor biosynthesis; adenosylcobalamin biosynthesis. Part of the energy-coupling factor (ECF) transporter complex CbiMNOQ involved in cobalt import. In Clostridioides difficile (strain R20291) (Peptoclostridium difficile), this protein is Cobalt transport protein CbiM.